A 210-amino-acid chain; its full sequence is Orotate phosphoribosyltransferase (210 aa).

5-phospho-alpha-D-ribose 1-diphosphate-binding positions include R94, K98, H100, and 120-128; that span reads EDLISTGGS. S124 is an orotate binding site.

The protein belongs to the purine/pyrimidine phosphoribosyltransferase family. PyrE subfamily. As to quaternary structure, homodimer. Mg(2+) is required as a cofactor.

The enzyme catalyses orotidine 5'-phosphate + diphosphate = orotate + 5-phospho-alpha-D-ribose 1-diphosphate. It participates in pyrimidine metabolism; UMP biosynthesis via de novo pathway; UMP from orotate: step 1/2. Functionally, catalyzes the transfer of a ribosyl phosphate group from 5-phosphoribose 1-diphosphate to orotate, leading to the formation of orotidine monophosphate (OMP). This is Orotate phosphoribosyltransferase from Bacillus anthracis (strain A0248).